The following is a 265-amino-acid chain: 4-hydroxy-tetrahydrodipicolinate reductase (265 aa).

Residues 9–14 (GALGRM), 100–102 (GTT), and 124–127 (SPNM) each bind NAD(+). The Proton donor/acceptor role is filled by H158. H159 lines the (S)-2,3,4,5-tetrahydrodipicolinate pocket. Residue K162 is the Proton donor of the active site. 168-169 (GT) lines the (S)-2,3,4,5-tetrahydrodipicolinate pocket.

This sequence belongs to the DapB family.

The protein localises to the cytoplasm. It catalyses the reaction (S)-2,3,4,5-tetrahydrodipicolinate + NAD(+) + H2O = (2S,4S)-4-hydroxy-2,3,4,5-tetrahydrodipicolinate + NADH + H(+). It carries out the reaction (S)-2,3,4,5-tetrahydrodipicolinate + NADP(+) + H2O = (2S,4S)-4-hydroxy-2,3,4,5-tetrahydrodipicolinate + NADPH + H(+). It functions in the pathway amino-acid biosynthesis; L-lysine biosynthesis via DAP pathway; (S)-tetrahydrodipicolinate from L-aspartate: step 4/4. In terms of biological role, catalyzes the conversion of 4-hydroxy-tetrahydrodipicolinate (HTPA) to tetrahydrodipicolinate. This chain is 4-hydroxy-tetrahydrodipicolinate reductase, found in Aquifex aeolicus (strain VF5).